Consider the following 285-residue polypeptide: MITSNTSFLALIGNPVSHSLSPIMQNAAIKYLGLDLIYIAIPCKNEDLEIVVNSLKKMNCKGLNITIPFKKKVFDLCSEISPVAKKIQAINTLKLKNDNNWSGTNTDIEGFIYPLKNLNLTNKNSIILGSGGAARSVIQGLIDLKLSKITIISRNNNSLNELITLFKNDIKIEGILNTNDEIGNLIEETDLIVNTTPIGMSQTSDNDAIPFGQSSWETIDSNTIVYDLIYNPSPTPFLKFCDRKGCMTIDGTQMLIAQGAKSLSFWTNGLEVPFEVMHDALKKYL.

Shikimate is bound by residues 19 to 21 and threonine 66; that span reads SLS. Lysine 70 functions as the Proton acceptor in the catalytic mechanism. 2 residues coordinate shikimate: asparagine 91 and aspartate 107. Residues 129–133 and leucine 228 contribute to the NADP(+) site; that span reads GSGGA. Tyrosine 230 provides a ligand contact to shikimate. Position 251 (glycine 251) interacts with NADP(+).

This sequence belongs to the shikimate dehydrogenase family. Homodimer.

It carries out the reaction shikimate + NADP(+) = 3-dehydroshikimate + NADPH + H(+). Its pathway is metabolic intermediate biosynthesis; chorismate biosynthesis; chorismate from D-erythrose 4-phosphate and phosphoenolpyruvate: step 4/7. In terms of biological role, involved in the biosynthesis of the chorismate, which leads to the biosynthesis of aromatic amino acids. Catalyzes the reversible NADPH linked reduction of 3-dehydroshikimate (DHSA) to yield shikimate (SA). The polypeptide is Shikimate dehydrogenase (NADP(+)) (Prochlorococcus marinus (strain MIT 9515)).